We begin with the raw amino-acid sequence, 227 residues long: Cytochrome c oxidase subunit 2 (227 aa).

At 1–14 (MTHPLQLGFQDATS) the chain is on the mitochondrial intermembrane side. Residues 15-45 (PIMEELLHFHDHTLMIVFLISSLVLYIITLM) form a helical membrane-spanning segment. The Mitochondrial matrix portion of the chain corresponds to 46 to 59 (LTTKLTHTSTMDAQ). The chain crosses the membrane as a helical span at residues 60–87 (EVETVWTILPAIILILIALPSLRILYMM). The Mitochondrial intermembrane portion of the chain corresponds to 88–227 (DEINNPLLTV…YFEDWSVSMT (140 aa)). The Cu cation site is built by His161, Cys196, Glu198, Cys200, His204, and Met207. Residue Glu198 participates in Mg(2+) binding. Tyr218 is subject to Phosphotyrosine.

It belongs to the cytochrome c oxidase subunit 2 family. Component of the cytochrome c oxidase (complex IV, CIV), a multisubunit enzyme composed of 14 subunits. The complex is composed of a catalytic core of 3 subunits MT-CO1, MT-CO2 and MT-CO3, encoded in the mitochondrial DNA, and 11 supernumerary subunits COX4I, COX5A, COX5B, COX6A, COX6B, COX6C, COX7A, COX7B, COX7C, COX8 and NDUFA4, which are encoded in the nuclear genome. The complex exists as a monomer or a dimer and forms supercomplexes (SCs) in the inner mitochondrial membrane with NADH-ubiquinone oxidoreductase (complex I, CI) and ubiquinol-cytochrome c oxidoreductase (cytochrome b-c1 complex, complex III, CIII), resulting in different assemblies (supercomplex SCI(1)III(2)IV(1) and megacomplex MCI(2)III(2)IV(2)). Found in a complex with TMEM177, COA6, COX18, COX20, SCO1 and SCO2. Interacts with TMEM177 in a COX20-dependent manner. Interacts with COX20. Interacts with COX16. Cu cation is required as a cofactor.

It is found in the mitochondrion inner membrane. It carries out the reaction 4 Fe(II)-[cytochrome c] + O2 + 8 H(+)(in) = 4 Fe(III)-[cytochrome c] + 2 H2O + 4 H(+)(out). Component of the cytochrome c oxidase, the last enzyme in the mitochondrial electron transport chain which drives oxidative phosphorylation. The respiratory chain contains 3 multisubunit complexes succinate dehydrogenase (complex II, CII), ubiquinol-cytochrome c oxidoreductase (cytochrome b-c1 complex, complex III, CIII) and cytochrome c oxidase (complex IV, CIV), that cooperate to transfer electrons derived from NADH and succinate to molecular oxygen, creating an electrochemical gradient over the inner membrane that drives transmembrane transport and the ATP synthase. Cytochrome c oxidase is the component of the respiratory chain that catalyzes the reduction of oxygen to water. Electrons originating from reduced cytochrome c in the intermembrane space (IMS) are transferred via the dinuclear copper A center (CU(A)) of subunit 2 and heme A of subunit 1 to the active site in subunit 1, a binuclear center (BNC) formed by heme A3 and copper B (CU(B)). The BNC reduces molecular oxygen to 2 water molecules using 4 electrons from cytochrome c in the IMS and 4 protons from the mitochondrial matrix. In Carlito syrichta (Philippine tarsier), this protein is Cytochrome c oxidase subunit 2 (MT-CO2).